A 371-amino-acid chain; its full sequence is Repetitive proline-rich cell wall protein 2 (371 aa).

The signal sequence occupies residues 1–22; sequence MASSNLLVLLLFALFAIPRGLA. A run of 66 repeats spans residues 32-36, 37-41, 42-46, 47-51, 52-56, 57-61, 62-66, 67-71, 72-76, 77-81, 82-86, 87-91, 92-96, 97-101, 102-106, 107-111, 112-116, 117-121, 122-126, 127-131, 132-136, 137-141, 142-146, 147-151, 152-156, 157-161, 162-166, 167-171, 172-176, 177-181, 182-186, 187-191, 192-196, 197-201, 202-206, 207-211, 212-216, 217-221, 222-226, 227-231, 232-236, 237-241, 242-246, 247-251, 252-256, 257-261, 262-266, 267-271, 272-276, 277-281, 282-286, 287-291, 292-296, 297-301, 302-306, 307-311, 312-316, 317-321, 322-326, 327-331, 332-336, 337-341, 342-346, 347-351, 352-356, and 357-361. The interval 32–366 is 67 X 5 AA approximate tandem repeats of P-P-[IV]-[EY]-K; it reads PPVYKPPVEK…PPVEKPPVYG (335 aa). The tract at residues 49 to 317 is disordered; the sequence is VEKPPVYKPP…PVEKPPVYKP (269 aa). The interval 339–371 is disordered; it reads VYKPPVEKPPVYKPPVYKPPVEKPPVYGPPHHP. The stretch at 362–366 is one 67; approximate repeat; that stretch reads PPVYG.

The protein belongs to the plant proline-rich protein superfamily. ENOD12 family. As to expression, expressed in hypocotyls, roots and mature root nodules.

Its subcellular location is the secreted. It is found in the cell wall. In terms of biological role, this is a developmentally regulated putative cell wall protein. This Medicago truncatula (Barrel medic) protein is Repetitive proline-rich cell wall protein 2 (PRP2).